The chain runs to 426 residues: Histidine--tRNA ligase (426 aa).

Belongs to the class-II aminoacyl-tRNA synthetase family. In terms of assembly, homodimer.

It localises to the cytoplasm. It carries out the reaction tRNA(His) + L-histidine + ATP = L-histidyl-tRNA(His) + AMP + diphosphate + H(+). The polypeptide is Histidine--tRNA ligase (Legionella pneumophila (strain Paris)).